Reading from the N-terminus, the 394-residue chain is Elongation factor Tu (394 aa).

The 195-residue stretch at 10–204 (LPHVNIGTIG…AVDEYIPTPT (195 aa)) folds into the tr-type G domain. Residues 19–26 (GHVDHGKT) are G1. 19 to 26 (GHVDHGKT) is a binding site for GTP. Thr-26 is a Mg(2+) binding site. The tract at residues 60–64 (GITIN) is G2. Positions 81 to 84 (DCPG) are G3. Residues 81 to 85 (DCPGH) and 136 to 139 (NKCD) contribute to the GTP site. Positions 136–139 (NKCD) are G4. A G5 region spans residues 174-176 (SAL).

It belongs to the TRAFAC class translation factor GTPase superfamily. Classic translation factor GTPase family. EF-Tu/EF-1A subfamily. Monomer.

It localises to the cytoplasm. The catalysed reaction is GTP + H2O = GDP + phosphate + H(+). Functionally, GTP hydrolase that promotes the GTP-dependent binding of aminoacyl-tRNA to the A-site of ribosomes during protein biosynthesis. This is Elongation factor Tu from Mesoplasma florum (strain ATCC 33453 / NBRC 100688 / NCTC 11704 / L1) (Acholeplasma florum).